Reading from the N-terminus, the 388-residue chain is LL-diaminopimelate aminotransferase (388 aa).

Tyrosine 16 and glycine 41 together coordinate substrate. Pyridoxal 5'-phosphate is bound by residues tyrosine 70, 104–105 (SK), tyrosine 129, asparagine 179, tyrosine 210, and 239–241 (SLS). The substrate site is built by lysine 105, tyrosine 129, and asparagine 179. Lysine 242 carries the post-translational modification N6-(pyridoxal phosphate)lysine. Pyridoxal 5'-phosphate is bound at residue arginine 250. Arginine 368 is a substrate binding site.

It belongs to the class-I pyridoxal-phosphate-dependent aminotransferase family. LL-diaminopimelate aminotransferase subfamily. As to quaternary structure, homodimer. It depends on pyridoxal 5'-phosphate as a cofactor.

It carries out the reaction (2S,6S)-2,6-diaminopimelate + 2-oxoglutarate = (S)-2,3,4,5-tetrahydrodipicolinate + L-glutamate + H2O + H(+). Its pathway is amino-acid biosynthesis; L-lysine biosynthesis via DAP pathway; LL-2,6-diaminopimelate from (S)-tetrahydrodipicolinate (aminotransferase route): step 1/1. Involved in the synthesis of meso-diaminopimelate (m-DAP or DL-DAP), required for both lysine and peptidoglycan biosynthesis. Catalyzes the direct conversion of tetrahydrodipicolinate to LL-diaminopimelate. The protein is LL-diaminopimelate aminotransferase of Maridesulfovibrio salexigens (strain ATCC 14822 / DSM 2638 / NCIMB 8403 / VKM B-1763) (Desulfovibrio salexigens).